Here is a 411-residue protein sequence, read N- to C-terminus: 2,3-bisphosphoglycerate-independent phosphoglycerate mutase (411 aa).

This sequence belongs to the BPG-independent phosphoglycerate mutase family. A-PGAM subfamily.

It carries out the reaction (2R)-2-phosphoglycerate = (2R)-3-phosphoglycerate. It participates in carbohydrate degradation; glycolysis; pyruvate from D-glyceraldehyde 3-phosphate: step 3/5. Catalyzes the interconversion of 2-phosphoglycerate and 3-phosphoglycerate. In Pyrobaculum aerophilum (strain ATCC 51768 / DSM 7523 / JCM 9630 / CIP 104966 / NBRC 100827 / IM2), this protein is 2,3-bisphosphoglycerate-independent phosphoglycerate mutase.